The chain runs to 150 residues: Large ribosomal subunit protein uL15 (150 aa).

The disordered stretch occupies residues 1–57 (MRLEDIRPQAGSTRRRRRLGRGVSAGQGASCGKGMRGQKARKGGSTRPGFEGGQTPL). A compositionally biased stretch (gly residues) spans 23 to 35 (VSAGQGASCGKGM).

It belongs to the universal ribosomal protein uL15 family. As to quaternary structure, part of the 50S ribosomal subunit.

In terms of biological role, binds to the 23S rRNA. The chain is Large ribosomal subunit protein uL15 from Synechococcus sp. (strain JA-2-3B'a(2-13)) (Cyanobacteria bacterium Yellowstone B-Prime).